The primary structure comprises 265 residues: GTP cyclohydrolase FolE2 (265 aa).

Belongs to the GTP cyclohydrolase IV family.

The enzyme catalyses GTP + H2O = 7,8-dihydroneopterin 3'-triphosphate + formate + H(+). Its pathway is cofactor biosynthesis; 7,8-dihydroneopterin triphosphate biosynthesis; 7,8-dihydroneopterin triphosphate from GTP: step 1/1. Converts GTP to 7,8-dihydroneopterin triphosphate. This is GTP cyclohydrolase FolE2 from Bordetella bronchiseptica (strain ATCC BAA-588 / NCTC 13252 / RB50) (Alcaligenes bronchisepticus).